The chain runs to 290 residues: 4-hydroxy-3-methylbut-2-enyl diphosphate reductase (290 aa).

Cys-13 lines the [4Fe-4S] cluster pocket. Residues His-41 and His-75 each contribute to the (2E)-4-hydroxy-3-methylbut-2-enyl diphosphate site. Dimethylallyl diphosphate-binding residues include His-41 and His-75. Residues His-41 and His-75 each coordinate isopentenyl diphosphate. Residue Cys-97 participates in [4Fe-4S] cluster binding. His-129 provides a ligand contact to (2E)-4-hydroxy-3-methylbut-2-enyl diphosphate. Dimethylallyl diphosphate is bound at residue His-129. His-129 provides a ligand contact to isopentenyl diphosphate. The active-site Proton donor is the Glu-131. Thr-167 is a (2E)-4-hydroxy-3-methylbut-2-enyl diphosphate binding site. [4Fe-4S] cluster is bound at residue Cys-198. (2E)-4-hydroxy-3-methylbut-2-enyl diphosphate contacts are provided by Ser-226, Ser-227, Asn-228, and Ser-270. Dimethylallyl diphosphate-binding residues include Ser-226, Ser-227, Asn-228, and Ser-270. Ser-226, Ser-227, Asn-228, and Ser-270 together coordinate isopentenyl diphosphate.

The protein belongs to the IspH family. [4Fe-4S] cluster is required as a cofactor.

The catalysed reaction is isopentenyl diphosphate + 2 oxidized [2Fe-2S]-[ferredoxin] + H2O = (2E)-4-hydroxy-3-methylbut-2-enyl diphosphate + 2 reduced [2Fe-2S]-[ferredoxin] + 2 H(+). It catalyses the reaction dimethylallyl diphosphate + 2 oxidized [2Fe-2S]-[ferredoxin] + H2O = (2E)-4-hydroxy-3-methylbut-2-enyl diphosphate + 2 reduced [2Fe-2S]-[ferredoxin] + 2 H(+). It participates in isoprenoid biosynthesis; dimethylallyl diphosphate biosynthesis; dimethylallyl diphosphate from (2E)-4-hydroxy-3-methylbutenyl diphosphate: step 1/1. Its pathway is isoprenoid biosynthesis; isopentenyl diphosphate biosynthesis via DXP pathway; isopentenyl diphosphate from 1-deoxy-D-xylulose 5-phosphate: step 6/6. Catalyzes the conversion of 1-hydroxy-2-methyl-2-(E)-butenyl 4-diphosphate (HMBPP) into a mixture of isopentenyl diphosphate (IPP) and dimethylallyl diphosphate (DMAPP). Acts in the terminal step of the DOXP/MEP pathway for isoprenoid precursor biosynthesis. This Parabacteroides distasonis (strain ATCC 8503 / DSM 20701 / CIP 104284 / JCM 5825 / NCTC 11152) protein is 4-hydroxy-3-methylbut-2-enyl diphosphate reductase.